The chain runs to 476 residues: Glycogen synthase (476 aa).

Residue Lys15 coordinates ADP-alpha-D-glucose.

It belongs to the glycosyltransferase 1 family. Bacterial/plant glycogen synthase subfamily.

The enzyme catalyses [(1-&gt;4)-alpha-D-glucosyl](n) + ADP-alpha-D-glucose = [(1-&gt;4)-alpha-D-glucosyl](n+1) + ADP + H(+). Its pathway is glycan biosynthesis; glycogen biosynthesis. Its function is as follows. Synthesizes alpha-1,4-glucan chains using ADP-glucose. This Marinomonas sp. (strain MWYL1) protein is Glycogen synthase.